The following is a 170-amino-acid chain: Small ribosomal subunit protein uS5 (170 aa).

Residues 13 to 76 form the S5 DRBM domain; the sequence is LTEKLIGVNR…DQARRSMVKI (64 aa).

It belongs to the universal ribosomal protein uS5 family. In terms of assembly, part of the 30S ribosomal subunit. Contacts proteins S4 and S8.

In terms of biological role, with S4 and S12 plays an important role in translational accuracy. Located at the back of the 30S subunit body where it stabilizes the conformation of the head with respect to the body. This chain is Small ribosomal subunit protein uS5, found in Laribacter hongkongensis (strain HLHK9).